The primary structure comprises 226 residues: ATP synthase F(0) complex subunit a (226 aa).

Helical transmembrane passes span Ile10–Ile30, Trp68–Leu88, Gln97–Phe117, Ile138–Val158, Ile164–Ile184, and Ala189–Ile209.

This sequence belongs to the ATPase A chain family. As to quaternary structure, component of the ATP synthase complex composed at least of ATP5F1A/subunit alpha, ATP5F1B/subunit beta, ATP5MC1/subunit c (homooctomer), MT-ATP6/subunit a, MT-ATP8/subunit 8, ATP5ME/subunit e, ATP5MF/subunit f, ATP5MG/subunit g, ATP5MK/subunit k, ATP5MJ/subunit j, ATP5F1C/subunit gamma, ATP5F1D/subunit delta, ATP5F1E/subunit epsilon, ATP5PF/subunit F6, ATP5PB/subunit b, ATP5PD/subunit d, ATP5PO/subunit OSCP. ATP synthase complex consists of a soluble F(1) head domain (subunits alpha(3) and beta(3)) - the catalytic core - and a membrane F(0) domain - the membrane proton channel (subunits c, a, 8, e, f, g, k and j). These two domains are linked by a central stalk (subunits gamma, delta, and epsilon) rotating inside the F1 region and a stationary peripheral stalk (subunits F6, b, d, and OSCP). Interacts with DNAJC30; interaction is direct.

Its subcellular location is the mitochondrion inner membrane. It catalyses the reaction H(+)(in) = H(+)(out). Its function is as follows. Subunit a, of the mitochondrial membrane ATP synthase complex (F(1)F(0) ATP synthase or Complex V) that produces ATP from ADP in the presence of a proton gradient across the membrane which is generated by electron transport complexes of the respiratory chain. ATP synthase complex consist of a soluble F(1) head domain - the catalytic core - and a membrane F(1) domain - the membrane proton channel. These two domains are linked by a central stalk rotating inside the F(1) region and a stationary peripheral stalk. During catalysis, ATP synthesis in the catalytic domain of F(1) is coupled via a rotary mechanism of the central stalk subunits to proton translocation. With the subunit c (ATP5MC1), forms the proton-conducting channel in the F(0) domain, that contains two crucial half-channels (inlet and outlet) that facilitate proton movement from the mitochondrial intermembrane space (IMS) into the matrix. Protons are taken up via the inlet half-channel and released through the outlet half-channel, following a Grotthuss mechanism. This chain is ATP synthase F(0) complex subunit a, found in Cricetulus griseus (Chinese hamster).